The sequence spans 899 residues: CNK3/IPCEF1 fusion protein (899 aa).

Positions 7–72 constitute an SAM domain; the sequence is WSPKQVVDWT…LEAVDLLCAL (66 aa). Positions 80-174 constitute a CRIC domain; that stretch reads NMKNLVLKLR…TTVQKDCFVA (95 aa). The region spanning 211-293 is the PDZ domain; the sequence is EVHLPNIKPG…GVVLLLKKRP (83 aa). Disordered stretches follow at residues 309–334 and 347–390; these read WKPP…DTSL and PPPP…FLDQ. The 126-residue stretch at 332–457 folds into the DUF1170 domain; it reads TSLKKEKSAI…ARPRGHGRKA (126 aa). S383 is subject to Phosphoserine. In terms of domain architecture, PH spans 503-602; that stretch reads HADCQGWLYK…WLNKLGSAVI (100 aa). 3 disordered regions span residues 605–687, 735–770, and 868–899; these read ESTT…PDTV, LSSD…TKVS, and QQQR…ENSI. Residues 613 to 624 show a composition bias toward acidic residues; the sequence is CYSESEQEDPEI. Over residues 634–662 the composition is skewed to low complexity; that stretch reads ASQTQSLTAQQASSSSPSLSGTSYSFSSL. Residues 663–676 are compositionally biased toward polar residues; the sequence is ENTVKTPSSFPSSL. The segment covering 735–745 has biased composition (low complexity); that stretch reads LSSDDTSSLSS. Residues 761-770 are compositionally biased toward basic and acidic residues; that stretch reads IMDKEETKVS. The interval 851 to 899 is required for interaction with CYTH2; it reads KYREWKVMNTLLIQDIYQQQRASPAPDDTDDTPQELKKSPSSPSVENSI. Phosphoserine is present on S873. Positions 889 to 899 are enriched in polar residues; the sequence is SPSSPSVENSI.

This sequence belongs to the CNKSR family.

Functionally, required for hepatocyte growth factor (HGF)-dependent activation of Arf6 and HGF-stimulated cell migration. This Homo sapiens (Human) protein is CNK3/IPCEF1 fusion protein (CNK3/IPCEF1).